Reading from the N-terminus, the 282-residue chain is Tyrosine recombinase XerA (282 aa).

Residues 2–79 (SEPNEVIEEF…ALRAYFRFEG (78 aa)) form the Core-binding (CB) domain. A Tyr recombinase domain is found at 95 to 271 (SLPKALTREE…TVEHLRKAQE (177 aa)). Catalysis depends on residues arginine 132, lysine 157, histidine 223, arginine 226, and histidine 249. Tyrosine 258 functions as the O-(3'-phospho-DNA)-tyrosine intermediate in the catalytic mechanism.

Belongs to the 'phage' integrase family. XerA subfamily.

It is found in the cytoplasm. Its function is as follows. Site-specific tyrosine recombinase, which acts by catalyzing the cutting and rejoining of the recombining DNA molecules. The sequence is that of Tyrosine recombinase XerA from Thermococcus kodakarensis (strain ATCC BAA-918 / JCM 12380 / KOD1) (Pyrococcus kodakaraensis (strain KOD1)).